We begin with the raw amino-acid sequence, 291 residues long: Small ribosomal subunit protein uS3 (291 aa).

The KH type-2 domain maps to 39-110 (IRLEIMKFLK…KISIKIKEVK (72 aa)).

The protein belongs to the universal ribosomal protein uS3 family. Part of the 30S ribosomal subunit. Forms a tight complex with proteins S10 and S14.

In terms of biological role, binds the lower part of the 30S subunit head. Binds mRNA in the 70S ribosome, positioning it for translation. This Borreliella afzelii (strain PKo) (Borrelia afzelii) protein is Small ribosomal subunit protein uS3.